A 477-amino-acid chain; its full sequence is Glycogen synthase (477 aa).

Lys-15 is an ADP-alpha-D-glucose binding site.

This sequence belongs to the glycosyltransferase 1 family. Bacterial/plant glycogen synthase subfamily.

It catalyses the reaction [(1-&gt;4)-alpha-D-glucosyl](n) + ADP-alpha-D-glucose = [(1-&gt;4)-alpha-D-glucosyl](n+1) + ADP + H(+). It functions in the pathway glycan biosynthesis; glycogen biosynthesis. Synthesizes alpha-1,4-glucan chains using ADP-glucose. The chain is Glycogen synthase from Shigella dysenteriae serotype 1 (strain Sd197).